Consider the following 200-residue polypeptide: Small ribosomal subunit protein uS4 (200 aa).

In terms of domain architecture, S4 RNA-binding spans 92-155 (SRLDAVVYQL…QKLNIIAESV (64 aa)).

It belongs to the universal ribosomal protein uS4 family. As to quaternary structure, part of the 30S ribosomal subunit. Contacts protein S5. The interaction surface between S4 and S5 is involved in control of translational fidelity.

In terms of biological role, one of the primary rRNA binding proteins, it binds directly to 16S rRNA where it nucleates assembly of the body of the 30S subunit. Functionally, with S5 and S12 plays an important role in translational accuracy. The sequence is that of Small ribosomal subunit protein uS4 from Macrococcus caseolyticus (strain JCSC5402) (Macrococcoides caseolyticum).